A 461-amino-acid polypeptide reads, in one-letter code: V-type ATP synthase beta chain (461 aa).

Belongs to the ATPase alpha/beta chains family.

Its function is as follows. Produces ATP from ADP in the presence of a proton gradient across the membrane. The V-type beta chain is a regulatory subunit. This chain is V-type ATP synthase beta chain, found in Streptococcus pneumoniae serotype 19F (strain G54).